The primary structure comprises 487 residues: DNA-dependent metalloprotease SPRTN (487 aa).

M1 carries the N-acetylmethionine modification. In terms of domain architecture, SprT-like spans 45–212 (LQGLFVLFND…KTCGGTYIKI (168 aa)). H111 provides a ligand contact to Zn(2+). E112 is a catalytic residue. The Zn(2+) site is built by H115 and H130. The disordered stretch occupies residues 219–248 (SKKGKGKTKLRKQPVSEAENKDKPNRGEKQ). Basic residues predominate over residues 220–230 (KKGKGKTKLRK). Residue K230 is modified to N6-acetyllysine. Basic and acidic residues predominate over residues 236–247 (AENKDKPNRGEK). An SHP-box motif is present at residues 253 to 261 (FTGKGYVLG). S267 bears the Phosphoserine mark. Residues 280-289 (SQEPLSQDHS) show a composition bias toward polar residues. Residues 280 to 317 (SQEPLSQDHSANALRPHSKTEVKFEQNGPSKKTSVASP) form a disordered region. A Glycyl lysine isopeptide (Lys-Gly) (interchain with G-Cter in SUMO2) cross-link involves residue K302. The segment covering 306 to 317 (NGPSKKTSVASP) has biased composition (polar residues). The short motif at 324–331 (QNVLSNYF) is the PIP-box element. Residue K340 forms a Glycyl lysine isopeptide (Lys-Gly) (interchain with G-Cter in SUMO2); alternate linkage. A Glycyl lysine isopeptide (Lys-Gly) (interchain with G-Cter in ubiquitin); alternate cross-link involves residue K340. The interval 347-379 (GSPVKSLTVGDSTTKSVSAGSQRRVTSSRTSLR) is disordered. S373 is modified (phosphoserine). The Nuclear localization signal motif lies at 401–412 (GKLPSKRPRIED). A Glycyl lysine isopeptide (Lys-Gly) (interchain with G-Cter in ubiquitin) cross-link involves residue K413. Residues K422 and K423 each participate in a glycyl lysine isopeptide (Lys-Gly) (interchain with G-Cter in SUMO2) cross-link. Positions 427-455 (QSGGGDVTSSSHPPAAAQSPSGASGQSRV) are disordered. Residues 435–453 (SSSHPPAAAQSPSGASGQS) are compositionally biased toward low complexity. The UBZ4-type zinc-finger motif lies at 455-482 (VVHCPVCQDEVSETQINEHLDWCLERDS). C458, C461, H473, and C477 together coordinate Zn(2+). A Glycyl lysine isopeptide (Lys-Gly) (interchain with G-Cter in SUMO2) cross-link involves residue K486.

The protein belongs to the Spartan family. In terms of assembly, homodimer. Interacts (VIA PIP-box) with PCNA (when ubiquitinated). Interacts (via its SHP-box) with VCP/p97. Interacts with RAD18. Interacts with KCTD13 and POLD3. Zn(2+) serves as cofactor. Post-translationally, autocatalytically cleaved in response to double-stranded DNA-binding: autocatalytic cleavage takes place in trans and leads to inactivation. Monoubiquitinated; monoubiquitination promotes exclusion from chromatin. Deubiquitinated by VCPIP1: deubiquitination is required for subsequent acetylation and recruitment to chromatin and DNA damage sites. In terms of processing, acetylated following deubiquitination by VCPIP1, leading to recruitment to chromatin and DNA damage sites. Post-translationally, phosphorylation by CHEK1 promotes recruitment to chromatin.

Its subcellular location is the nucleus. It is found in the chromosome. DNA-binding activates the protease activity: single-stranded DNA-binding specifically activates ability to cleave covalent DNA-protein cross-links (DPCs). In contrast, double-stranded DNA-binding specifically activates autocatalytic cleavage, and subsequent inactivation. Functionally, DNA-dependent metalloendopeptidase that mediates the proteolytic cleavage of covalent DNA-protein cross-links (DPCs) during DNA synthesis, thereby playing a key role in maintaining genomic integrity. DPCs are highly toxic DNA lesions that interfere with essential chromatin transactions, such as replication and transcription, and which are induced by reactive agents, such as UV light or formaldehyde. Associates with the DNA replication machinery and specifically removes DPCs during DNA synthesis. Catalyzes proteolytic cleavage of the HMCES DNA-protein cross-link following unfolding by the BRIP1/FANCJ helicase. Acts as a pleiotropic protease for DNA-binding proteins cross-linked with DNA, such as TOP1, TOP2A, histones H3 and H4. Mediates degradation of DPCs that are not ubiquitinated, while it is not able to degrade ubiquitinated DPCs. SPRTN activation requires polymerase collision with DPCs followed by helicase bypass of DPCs. Involved in recruitment of VCP/p97 to sites of DNA damage. Also acts as an activator of CHEK1 during normal DNA replication by mediating proteolytic cleavage of CHEK1, thereby promoting CHEK1 removal from chromatin and subsequent activation. Does not activate CHEK1 in response to DNA damage. May also act as a 'reader' of ubiquitinated PCNA: recruited to sites of UV damage and interacts with ubiquitinated PCNA and RAD18, the E3 ubiquitin ligase that monoubiquitinates PCNA. Facilitates chromatin association of RAD18 and is required for efficient PCNA monoubiquitination, promoting a feed-forward loop to enhance PCNA ubiquitination and translesion DNA synthesis. In Bos taurus (Bovine), this protein is DNA-dependent metalloprotease SPRTN.